The sequence spans 596 residues: MPPRGLELLIAQTILQGFDAQYGRFLEITAGAQHRFEQADWHAVQQAMKSRIHLYDHHVGLVVEQLRCIMEGKATDPDFLLRVKRHYTDLLPDYPRFEIAESFFNSVYCRLYDHRSLTPDRLFIFSSQPERRFRTMPRPLAKNFFPEQGWQPLLTTLLTDLPLRLPWQDLARDVRYIIAHLNETLGPARLAQAHLEMANELFYRNKAAWLVGKLRLPDATLPFLLPVHRSDDGELFVDTCLTGSAGASIVFGFARSYFMVYAPLPAALVEWLREILPGKTTAELYMAIGCQKHAKTESYREYLHYLRHADEQFIEAPGIRGMVMLVFTLPGFDRVFKVIKDRFAPQKEMSEAHVRACYQLVKEHDRVGRMADTQEFENFVIEKRRISPELMALLQQEVGQKLTDMGDKISISHLYIERRMVPLNIWLEQATGQQLRDAIEEYGNAIRQLAAANIFPGDMLFKNFGVTRHGRVVFYDYDEICYMTEVNFRDIPPPRYPEDELSAEPWYSVAPGDVFPEEFRHWLCADPKIGPLFEEMHSDLFSASYWRALQTRIREGYVEDVYAYRRRQRFCVRWKNHNGHPEAAVSAIAPSAVGEG.

ATP is bound by residues 316–322 and K337; that span reads APGIRGM. Residue D372 is part of the active site.

It belongs to the AceK family.

It is found in the cytoplasm. The enzyme catalyses L-seryl-[isocitrate dehydrogenase] + ATP = O-phospho-L-seryl-[isocitrate dehydrogenase] + ADP + H(+). Its function is as follows. Bifunctional enzyme which can phosphorylate or dephosphorylate isocitrate dehydrogenase (IDH) on a specific serine residue. This is a regulatory mechanism which enables bacteria to bypass the Krebs cycle via the glyoxylate shunt in response to the source of carbon. When bacteria are grown on glucose, IDH is fully active and unphosphorylated, but when grown on acetate or ethanol, the activity of IDH declines drastically concomitant with its phosphorylation. In Cronobacter sakazakii (strain ATCC BAA-894) (Enterobacter sakazakii), this protein is Isocitrate dehydrogenase kinase/phosphatase.